We begin with the raw amino-acid sequence, 505 residues long: MASIDFRNKINWHRRYRSPQGVKTEHEILRIFESDRGRIINSPAIRRLQQKTQVFPLERNAAVRTRLTHSMEVQQVGRYIAKEILSRLKAQNLLEEYGLDALTGPFESIVEMACLMHDIGNPPFGHFGEAAINDWFRQRLYPEDAESQPLTHDRCVVSSLRLQEGEESLNDIRRKVRQDICYFEGNAQGIRLVHTLMRMNLTWAQVGGILKYTRPAWWRGPVPDSHRYLMKKPGYYLSEEKYIARLRKELQLAPYSRFPLTWIMEAADDISYCVADLEDAVEKRIFSVEQLYHHLYHAWGHHEKDSLFELVVGNAWEKSRANTLSRSTEEQFFMYLRVNTLNKLVPYAAQRFIDNLPQIFAGTFNQALLEDASGFSRLLELYKNVAVEHVFSHPDVEQLELQGYRVISGLLDIYQPLLSMSLNDFSELVEKERLKRFPIESRLFQKLSTRHRLAYVEVVSKLPMDSAEYPVLEYYYRCRLVQDYISGMTDLYAWDEYRRLMAVEQ.

Positions 66–273 (RLTHSMEVQQ…MEAADDISYC (208 aa)) constitute an HD domain.

Belongs to the dGTPase family. Type 1 subfamily. Homotetramer. Requires Mg(2+) as cofactor.

The enzyme catalyses dGTP + H2O = 2'-deoxyguanosine + triphosphate + H(+). In terms of biological role, dGTPase preferentially hydrolyzes dGTP over the other canonical NTPs. In Salmonella arizonae (strain ATCC BAA-731 / CDC346-86 / RSK2980), this protein is Deoxyguanosinetriphosphate triphosphohydrolase.